The following is a 183-amino-acid chain: MTEDNKKQRLIWIDLEMTGLEPDENHIIEVATIVTDAQLNTLAEGPVIAVHQPQKHLDRMDDWNVKTHTGSGLVERVKESQHDERKAAAETIEFLRQYIDAGVSPMCGNSICQDRRFLAKHMPELEAFFHYRNLDVSTLKELAKRWNPEVANSFKKSGAHEALADIRESIAELQHYREHFFSK.

Residues 10–173 form the Exonuclease domain; that stretch reads LIWIDLEMTG…ADIRESIAEL (164 aa). The active site involves Tyr-131.

Belongs to the oligoribonuclease family.

It localises to the cytoplasm. In terms of biological role, 3'-to-5' exoribonuclease specific for small oligoribonucleotides. The polypeptide is Oligoribonuclease (Idiomarina loihiensis (strain ATCC BAA-735 / DSM 15497 / L2-TR)).